A 102-amino-acid chain; its full sequence is Small ribosomal subunit protein uS10 (102 aa).

The protein belongs to the universal ribosomal protein uS10 family. In terms of assembly, part of the 30S ribosomal subunit.

In terms of biological role, involved in the binding of tRNA to the ribosomes. The chain is Small ribosomal subunit protein uS10 from Halalkalibacterium halodurans (strain ATCC BAA-125 / DSM 18197 / FERM 7344 / JCM 9153 / C-125) (Bacillus halodurans).